The following is a 265-amino-acid chain: U6 snRNA phosphodiesterase 1 (265 aa).

The tract at residues 1 to 67 is disordered; the sequence is MSAAPLVGYS…EGPVDDSAKH (67 aa). The span at 20–32 shows a compositional bias: basic and acidic residues; it reads AGARVRPGAEGRS. Residue H120 is the Proton acceptor of the active site. Position 120-122 (120-122) interacts with AMP; sequence HLS. UMP is bound by residues Q164, Y202, and 206 to 210; that span reads SFHIS. AMP contacts are provided by residues Y202 and 204-210; that span reads DPSFHIS. H208 serves as the catalytic Proton donor.

This sequence belongs to the 2H phosphoesterase superfamily. USB1 family. As to quaternary structure, interacts with PLRG1, CDC5L and PRPF19.

Its subcellular location is the nucleus. The catalysed reaction is a 3'-end uridylyl-uridine-RNA = a 3'-end 2',3'-cyclophospho-uridine-RNA + uridine. It carries out the reaction a 3'-end uridylyl-adenosine-RNA = a 3'-end 2',3'-cyclophospho-uridine-RNA + adenosine. 3'-5' RNA exonuclease that trims the 3' end of oligo(U) and oligo(A) tracts of the pre-U6 small nuclear RNA (snRNA) molecule, leading to the formation of a mature U6 snRNA 3' end-terminated with a 2',3'-cyclic phosphate. Participates in the U6 snRNA 3' end processing that prevents U6 snRNA degradation. In addition also removes uridines from the 3' end of U6atac snRNA and possibly the vault RNA VTRNA1-1. In Bos taurus (Bovine), this protein is U6 snRNA phosphodiesterase 1.